A 207-amino-acid polypeptide reads, in one-letter code: Large ribosomal subunit protein uL4 (207 aa).

Positions 48–70 (KAQKTRSEVSGGGAKPWRQKGTG) are disordered.

The protein belongs to the universal ribosomal protein uL4 family. In terms of assembly, part of the 50S ribosomal subunit.

In terms of biological role, one of the primary rRNA binding proteins, this protein initially binds near the 5'-end of the 23S rRNA. It is important during the early stages of 50S assembly. It makes multiple contacts with different domains of the 23S rRNA in the assembled 50S subunit and ribosome. Functionally, forms part of the polypeptide exit tunnel. In Francisella philomiragia subsp. philomiragia (strain ATCC 25017 / CCUG 19701 / FSC 153 / O#319-036), this protein is Large ribosomal subunit protein uL4.